The following is a 444-amino-acid chain: Trigger factor (444 aa).

The 86-residue stretch at 161–246 folds into the PPIase FKBP-type domain; it reads GDRVVIDFKG…VQKVEGQKLP (86 aa).

It belongs to the FKBP-type PPIase family. Tig subfamily.

Its subcellular location is the cytoplasm. It catalyses the reaction [protein]-peptidylproline (omega=180) = [protein]-peptidylproline (omega=0). Its function is as follows. Involved in protein export. Acts as a chaperone by maintaining the newly synthesized protein in an open conformation. Functions as a peptidyl-prolyl cis-trans isomerase. In Saccharophagus degradans (strain 2-40 / ATCC 43961 / DSM 17024), this protein is Trigger factor.